The primary structure comprises 235 residues: AA9 family lytic polysaccharide monooxygenase D (235 aa).

Positions 1–18 are cleaved as a signal peptide; sequence MKAFFAVLAVVSAPFVLG. His-19 contacts Cu(2+). O-linked (Man...) serine glycosylation occurs at Ser-29. A disulfide bond links Cys-61 and Cys-181. A Cu(2+)-binding site is contributed by His-94. 2 residues coordinate O2: His-167 and Gln-176. Tyr-178 contacts Cu(2+). A glycan (N-linked (GlcNAc...) asparagine) is linked at Asn-221.

The protein belongs to the polysaccharide monooxygenase AA9 family. Cu(2+) is required as a cofactor.

Its subcellular location is the secreted. The catalysed reaction is [(1-&gt;4)-beta-D-glucosyl]n+m + reduced acceptor + O2 = 4-dehydro-beta-D-glucosyl-[(1-&gt;4)-beta-D-glucosyl]n-1 + [(1-&gt;4)-beta-D-glucosyl]m + acceptor + H2O.. Functionally, lytic polysaccharide monooxygenase (LPMO) that depolymerizes crystalline and amorphous polysaccharides via the oxidation of scissile alpha- or beta-(1-4)-glycosidic bonds, yielding only C1 oxidation products. Catalysis by LPMOs requires the reduction of the active-site copper from Cu(II) to Cu(I) by a reducing agent and H(2)O(2) or O(2) as a cosubstrate. The chain is AA9 family lytic polysaccharide monooxygenase D from Phanerodontia chrysosporium (White-rot fungus).